Here is a 250-residue protein sequence, read N- to C-terminus: Probable S-methyl-5'-thioinosine phosphorylase (250 aa).

Phosphate-binding positions include Thr14 and 56 to 57; that span reads RH. Residue Met189 participates in substrate binding. Thr190 contacts phosphate. 213–215 is a substrate binding site; sequence NWA.

This sequence belongs to the PNP/MTAP phosphorylase family. MTAP subfamily. Homotrimer.

It catalyses the reaction S-methyl-5'-thioinosine + phosphate = 5-(methylsulfanyl)-alpha-D-ribose 1-phosphate + hypoxanthine. Its pathway is purine metabolism; purine nucleoside salvage. Catalyzes the reversible phosphorylation of S-methyl-5'-thioinosine (MTI) to hypoxanthine and 5-methylthioribose-1-phosphate. Involved in the breakdown of S-methyl-5'-thioadenosine (MTA), a major by-product of polyamine biosynthesis. Catabolism of (MTA) occurs via deamination to MTI and phosphorolysis to hypoxanthine. This is Probable S-methyl-5'-thioinosine phosphorylase from Xanthomonas campestris pv. campestris (strain ATCC 33913 / DSM 3586 / NCPPB 528 / LMG 568 / P 25).